We begin with the raw amino-acid sequence, 180 residues long: Acireductone dioxygenase (180 aa).

Positions 97, 99, 103, and 141 each coordinate Fe(2+). Positions 97, 99, 103, and 141 each coordinate Ni(2+).

It belongs to the acireductone dioxygenase (ARD) family. As to quaternary structure, monomer. Fe(2+) serves as cofactor. It depends on Ni(2+) as a cofactor.

The enzyme catalyses 1,2-dihydroxy-5-(methylsulfanyl)pent-1-en-3-one + O2 = 3-(methylsulfanyl)propanoate + CO + formate + 2 H(+). The catalysed reaction is 1,2-dihydroxy-5-(methylsulfanyl)pent-1-en-3-one + O2 = 4-methylsulfanyl-2-oxobutanoate + formate + 2 H(+). The protein operates within amino-acid biosynthesis; L-methionine biosynthesis via salvage pathway; L-methionine from S-methyl-5-thio-alpha-D-ribose 1-phosphate: step 5/6. Functionally, catalyzes 2 different reactions between oxygen and the acireductone 1,2-dihydroxy-3-keto-5-methylthiopentene (DHK-MTPene) depending upon the metal bound in the active site. Fe-containing acireductone dioxygenase (Fe-ARD) produces formate and 2-keto-4-methylthiobutyrate (KMTB), the alpha-ketoacid precursor of methionine in the methionine recycle pathway. Ni-containing acireductone dioxygenase (Ni-ARD) produces methylthiopropionate, carbon monoxide and formate, and does not lie on the methionine recycle pathway. In Serratia proteamaculans (strain 568), this protein is Acireductone dioxygenase.